The following is a 232-amino-acid chain: Large ribosomal subunit protein uL1 (232 aa).

It belongs to the universal ribosomal protein uL1 family. Part of the 50S ribosomal subunit.

Functionally, binds directly to 23S rRNA. The L1 stalk is quite mobile in the ribosome, and is involved in E site tRNA release. Protein L1 is also a translational repressor protein, it controls the translation of the L11 operon by binding to its mRNA. In Cutibacterium acnes (strain DSM 16379 / KPA171202) (Propionibacterium acnes), this protein is Large ribosomal subunit protein uL1.